The following is a 930-amino-acid chain: Beta-mannosidase A (930 aa).

An N-terminal signal peptide occupies residues 1-21 (MHVKAETVLALLTPGLPSVVG). Asparagine 62, asparagine 246, asparagine 281, asparagine 315, and asparagine 346 each carry an N-linked (GlcNAc...) asparagine glycan. Glutamate 478 acts as the Proton donor in catalysis. 11 N-linked (GlcNAc...) asparagine glycosylation sites follow: asparagine 536, asparagine 607, asparagine 630, asparagine 657, asparagine 737, asparagine 760, asparagine 782, asparagine 789, asparagine 797, asparagine 823, and asparagine 909.

The protein belongs to the glycosyl hydrolase 2 family. Beta-mannosidase A subfamily. In terms of assembly, homodimer.

Its subcellular location is the secreted. It carries out the reaction Hydrolysis of terminal, non-reducing beta-D-mannose residues in beta-D-mannosides.. Its pathway is glycan metabolism; N-glycan degradation. Exoglycosidase that cleaves the single beta-linked mannose residue from the non-reducing end of beta-mannosidic oligosaccharides of various complexity and length. Involved in the degradation of polymeric mannan and galactomannan. In Neosartorya fischeri (strain ATCC 1020 / DSM 3700 / CBS 544.65 / FGSC A1164 / JCM 1740 / NRRL 181 / WB 181) (Aspergillus fischerianus), this protein is Beta-mannosidase A (mndA).